The sequence spans 546 residues: Metal transporter Nramp6.2 (546 aa).

Helical transmembrane passes span F50–L70, E83–A103, S128–F150, I154–G176, L187–V207, I233–L253, Y270–I290, and I333–G353. An N-linked (GlcNAc...) asparagine glycan is attached at N371. 4 consecutive transmembrane segments (helical) span residues T374–A394, L397–L417, I433–Y453, and V473–L493.

This sequence belongs to the NRAMP (TC 2.A.55) family.

The protein resides in the membrane. Probable divalent metal transporter. The polypeptide is Metal transporter Nramp6.2 (Populus trichocarpa (Western balsam poplar)).